Reading from the N-terminus, the 1086-residue chain is Receptor-type guanylate cyclase gcy-6 (1086 aa).

Residues 1–21 (MIGVYLRSVIFPLLFVIQTIC) form the signal peptide. Over 22 to 487 (QPPGNVFHLG…PANVFFQYIG (466 aa)) the chain is Extracellular. Residues Asn325, Asn343, Asn387, and Asn427 are each glycosylated (N-linked (GlcNAc...) asparagine). A helical membrane pass occupies residues 488 to 508 (WFIAAIIIIFFTIMGAILAFI). At 509–1086 (YLCHAKQQEV…APKILKKKQD (578 aa)) the chain is on the cytoplasmic side. A Protein kinase domain is found at 560 to 836 (SSTLSEVGET…NDNLMDHVFN (277 aa)). Residues 566 to 574 (VGETRNYLF) and Lys589 contribute to the ATP site. Residues 894–1024 (TLFFSDVVSF…DAVNTASRME (131 aa)) form the Guanylate cyclase domain.

The protein belongs to the adenylyl cyclase class-4/guanylyl cyclase family. In terms of tissue distribution, expressed in both ASEL and ASER neurons throughout late embryonic and early larval stages. In adults, expressed asymmetrically in ASE left (ASEL) sensory neuron.

The protein localises to the cell membrane. It carries out the reaction GTP = 3',5'-cyclic GMP + diphosphate. In terms of biological role, guanylate cyclase involved in the production of the second messenger cGMP. Regulates chemotaxis responses toward the salt ion Mg(2+) and to a lesser extent toward Cl(1-) in ASE left (ASEL) sensory neuron. The protein is Receptor-type guanylate cyclase gcy-6 of Caenorhabditis elegans.